The following is a 181-amino-acid chain: Bradykinin potentiating and C-type natriuretic peptides (181 aa).

The signal sequence occupies residues 1 to 23 (MFVSRLAASGLLLLALLAVSLDG). Positions 24 to 27 (KPLQ) are excised as a propeptide. 2 positions are modified to pyrrolidone carboxylic acid: glutamine 28 and glutamine 31. The propeptide occupies 41–43 (LVV). Residue glutamine 44 is modified to Pyrrolidone carboxylic acid. Positions 50–52 (TQL) are excised as a propeptide. A Pyrrolidone carboxylic acid modification is found at glutamine 53. A propeptide spanning residues 59-159 (AGGTTALREE…ARRLKGLAKK (101 aa)) is cleaved from the precursor. The interval 74 to 150 (EAALDTPPAG…GGGCGGGGGA (77 aa)) is disordered. Over residues 104–114 (SKGASATSAAS) the composition is skewed to low complexity. Residues 140-150 (AGGGCGGGGGA) show a composition bias toward gly residues. Cysteine 165 and cysteine 181 form a disulfide bridge.

This sequence in the N-terminal section; belongs to the bradykinin-potentiating peptide family. It in the C-terminal section; belongs to the natriuretic peptide family. Venom gland.

The protein resides in the secreted. Its function is as follows. Bradykinin-potentiating peptide both inhibits the activity of the angiotensin-converting enzyme (ACE) and enhances the action of bradykinin by inhibiting the peptidases that inactivate it. It acts as an indirect hypotensive agent. Synthetic Cdt1a, Cdt1b and the short hexapeptide Cdt3 are able to potentiate the hypotensive effect mediated by Bk on the blood pressure of anesthetized rats. Has a vasorelaxant activity in rat aortic strips and a diuretic potency in anesthetized rats. May act by activating natriuretic receptors (NPR1 and/or NPR2). The polypeptide is Bradykinin potentiating and C-type natriuretic peptides (Crotalus durissus terrificus (South American rattlesnake)).